The chain runs to 122 residues: Large ribosomal subunit protein uL22 (122 aa).

The segment at 102 to 122 (VAEGKEMKSSKSHKKNQAEGK) is disordered.

It belongs to the universal ribosomal protein uL22 family. In terms of assembly, part of the 50S ribosomal subunit.

Its function is as follows. This protein binds specifically to 23S rRNA; its binding is stimulated by other ribosomal proteins, e.g. L4, L17, and L20. It is important during the early stages of 50S assembly. It makes multiple contacts with different domains of the 23S rRNA in the assembled 50S subunit and ribosome. Functionally, the globular domain of the protein is located near the polypeptide exit tunnel on the outside of the subunit, while an extended beta-hairpin is found that lines the wall of the exit tunnel in the center of the 70S ribosome. This Helicobacter pylori (strain G27) protein is Large ribosomal subunit protein uL22.